The sequence spans 320 residues: o-succinylbenzoate synthase (320 aa).

Lysine 133 (proton donor) is an active-site residue. The Mg(2+) site is built by aspartate 161, glutamate 190, and aspartate 213. Lysine 235 functions as the Proton acceptor in the catalytic mechanism.

It belongs to the mandelate racemase/muconate lactonizing enzyme family. MenC type 1 subfamily. Requires a divalent metal cation as cofactor.

The enzyme catalyses (1R,6R)-6-hydroxy-2-succinyl-cyclohexa-2,4-diene-1-carboxylate = 2-succinylbenzoate + H2O. Its pathway is quinol/quinone metabolism; 1,4-dihydroxy-2-naphthoate biosynthesis; 1,4-dihydroxy-2-naphthoate from chorismate: step 4/7. The protein operates within quinol/quinone metabolism; menaquinone biosynthesis. In terms of biological role, converts 2-succinyl-6-hydroxy-2,4-cyclohexadiene-1-carboxylate (SHCHC) to 2-succinylbenzoate (OSB). In Escherichia coli O127:H6 (strain E2348/69 / EPEC), this protein is o-succinylbenzoate synthase.